The primary structure comprises 91 residues: HssA/B-like protein 24 (91 aa).

Belongs to the hssA/B family.

The chain is HssA/B-like protein 24 (hssl24) from Dictyostelium discoideum (Social amoeba).